The sequence spans 586 residues: Frizzled-10-A (586 aa).

Residues 1–26 form the signal peptide; sequence MDVSGVTGLLRGTALLLVLAAALCSA. The Extracellular portion of the chain corresponds to 27-230; that stretch reads ISSINPDRSG…DVYWSKDDKK (204 aa). In terms of domain architecture, FZ spans 35–156; the sequence is SGDGRCQAIE…NDPNYLCMEA (122 aa). Disulfide bonds link Cys-40–Cys-101, Cys-48–Cys-94, Cys-85–Cys-123, Cys-112–Cys-153, and Cys-116–Cys-140. Asn-54 is a glycosylation site (N-linked (GlcNAc...) asparagine). The N-linked (GlcNAc...) asparagine glycan is linked to Asn-159. The disordered stretch occupies residues 161-199; sequence TDETPRGSSMLPPIFRPQRPSSGHEIYPKDPTSRSSCEN. A helical membrane pass occupies residues 231-251; the sequence is FAFIWIAIWSILCFFSSAFTV. Residues 252–267 are Cytoplasmic-facing; sequence LTFLVDPLRFKYPERP. Residues 268-288 form a helical membrane-spanning segment; it reads IIFLSMCYCVYSVGYIIRLFA. The Extracellular portion of the chain corresponds to 289-315; that stretch reads GADSIACDRDSGQLYVIQEGLESTGCT. Residues 316–336 traverse the membrane as a helical segment; the sequence is IVFLILYYFGMASSLWWVILT. At 337 to 356 the chain is on the cytoplasmic side; the sequence is LTWFLAAGKKWGHEAIEANS. A helical transmembrane segment spans residues 357–377; sequence SYFHLAAWAIPAVKTIMILVM. The Extracellular segment spans residues 378–401; sequence RRVAGDELTGVCYVGSMDVNALTG. A helical membrane pass occupies residues 402-422; the sequence is FVLIPLACYLIIGTSFILSGF. Residues 423-448 are Cytoplasmic-facing; that stretch reads VALFHIRRVMKTGGENTDKLEKLMVR. Residues 449 to 469 form a helical membrane-spanning segment; the sequence is IGVFSVLYTVPATCVIACYFY. Residues 470–507 lie on the Extracellular side of the membrane; sequence ERLNMDFWKILATQDKCKMDSQTKTLDCTMTSSIPAVE. A helical transmembrane segment spans residues 508–528; the sequence is IFMVKIFMLLVVGITSGMWIW. Topologically, residues 529-586 are cytoplasmic; that stretch reads TSKTVQSWQNVFSKRLKKRNRSKPASVITSAGIYKKPQHPPKVHHGKYESALQSPTCV. The short motif at 531 to 536 is the Lys-Thr-X-X-X-Trp motif, mediates interaction with the PDZ domain of Dvl family members element; the sequence is KTVQSW. Residues 563 to 586 form a disordered region; sequence KKPQHPPKVHHGKYESALQSPTCV. The segment covering 564-573 has biased composition (basic residues); it reads KPQHPPKVHH. Positions 584-586 match the PDZ-binding motif; sequence TCV.

This sequence belongs to the G-protein coupled receptor Fz/Smo family. In terms of tissue distribution, expressed in liver, lung, brain, testis, stomach, kidney, eye, skeletal muscle and skin.

Its subcellular location is the cell membrane. Receptor for Wnt proteins. Most of frizzled receptors are coupled to the beta-catenin canonical signaling pathway, which leads to the activation of disheveled proteins, inhibition of GSK-3 kinase, nuclear accumulation of beta-catenin and activation of Wnt target genes. A second signaling pathway involving PKC and calcium fluxes has been seen for some family members, but it is not yet clear if it represents a distinct pathway or if it can be integrated in the canonical pathway, as PKC seems to be required for Wnt-mediated inactivation of GSK-3 kinase. Both pathways seem to involve interactions with G-proteins. May be involved in transduction and intercellular transmission of polarity information during tissue morphogenesis and/or in differentiated tissues. Activated by Wnt8. Could have an antagonizing activity in the morphogenesis during development. This Xenopus laevis (African clawed frog) protein is Frizzled-10-A (fzd10-a).